The following is a 137-amino-acid chain: Small ribosomal subunit protein uS12 (137 aa).

Residues Met-1–Ala-23 form a disordered region. Position 102 is a 3-methylthioaspartic acid (Asp-102).

Belongs to the universal ribosomal protein uS12 family. As to quaternary structure, part of the 30S ribosomal subunit. Contacts proteins S8 and S17. May interact with IF1 in the 30S initiation complex.

In terms of biological role, with S4 and S5 plays an important role in translational accuracy. Its function is as follows. Interacts with and stabilizes bases of the 16S rRNA that are involved in tRNA selection in the A site and with the mRNA backbone. Located at the interface of the 30S and 50S subunits, it traverses the body of the 30S subunit contacting proteins on the other side and probably holding the rRNA structure together. The combined cluster of proteins S8, S12 and S17 appears to hold together the shoulder and platform of the 30S subunit. This is Small ribosomal subunit protein uS12 from Levilactobacillus brevis (strain ATCC 367 / BCRC 12310 / CIP 105137 / JCM 1170 / LMG 11437 / NCIMB 947 / NCTC 947) (Lactobacillus brevis).